Consider the following 284-residue polypeptide: D-tagatose-1,6-bisphosphate aldolase subunit GatY (284 aa).

Residue Asp-82 is the Proton donor of the active site. Zn(2+)-binding residues include His-83 and His-180. Gly-181 contributes to the dihydroxyacetone phosphate binding site. His-208 contacts Zn(2+). Dihydroxyacetone phosphate-binding positions include 209–211 and 230–233; these read GAS and NVAT.

The protein belongs to the class II fructose-bisphosphate aldolase family. TagBP aldolase GatY subfamily. In terms of assembly, forms a complex with GatZ. Zn(2+) is required as a cofactor.

It catalyses the reaction D-tagatofuranose 1,6-bisphosphate = D-glyceraldehyde 3-phosphate + dihydroxyacetone phosphate. The protein operates within carbohydrate metabolism; D-tagatose 6-phosphate degradation; D-glyceraldehyde 3-phosphate and glycerone phosphate from D-tagatose 6-phosphate: step 2/2. In terms of biological role, catalytic subunit of the tagatose-1,6-bisphosphate aldolase GatYZ, which catalyzes the reversible aldol condensation of dihydroxyacetone phosphate (DHAP or glycerone-phosphate) with glyceraldehyde 3-phosphate (G3P) to produce tagatose 1,6-bisphosphate (TBP). Requires GatZ subunit for full activity and stability. Is involved in the catabolism of galactitol and D-tagatose. The chain is D-tagatose-1,6-bisphosphate aldolase subunit GatY (gatY) from Klebsiella oxytoca.